The following is a 177-amino-acid chain: LOB domain-containing protein 33 (177 aa).

Residues 6-108 (SSCGACKFLR…EEIEFLGSQM (103 aa)) enclose the LOB domain.

This sequence belongs to the LOB domain-containing protein family. As to expression, expressed in roots.

The protein is LOB domain-containing protein 33 (LBD33) of Arabidopsis thaliana (Mouse-ear cress).